The primary structure comprises 352 residues: Trifunctional sesterterpene/triterpene/sesquarterpene synthase (352 aa).

Belongs to the large terpene synthase family.

The catalysed reaction is (2E,6E,10E,14E)-geranylfarnesyl diphosphate = beta-geranylfarnesene + diphosphate. It catalyses the reaction all-trans-hexaprenyl diphosphate = beta-hexaprene + diphosphate. The enzyme catalyses all-trans-heptaprenyl diphosphate = beta-heptaprene + diphosphate. Functionally, catalyzes the conversion of geranylfarnesyl diphosphate (GFPP) and hexaprenyl diphosphate (HexPP) into beta-geranylfarnesene and beta-hexaprene, respectively. Also produces beta-heptaprene from heptaprenyl diphosphate (HepPP) as a minor product. The polypeptide is Trifunctional sesterterpene/triterpene/sesquarterpene synthase (Shouchella clausii (Alkalihalobacillus clausii)).